The chain runs to 209 residues: Ribosomal RNA large subunit methyltransferase E (209 aa).

Residues Gly63, Trp65, Asp83, Asp99, and Asp124 each contribute to the S-adenosyl-L-methionine site. The active-site Proton acceptor is the Lys164.

This sequence belongs to the class I-like SAM-binding methyltransferase superfamily. RNA methyltransferase RlmE family.

The protein resides in the cytoplasm. It catalyses the reaction uridine(2552) in 23S rRNA + S-adenosyl-L-methionine = 2'-O-methyluridine(2552) in 23S rRNA + S-adenosyl-L-homocysteine + H(+). Specifically methylates the uridine in position 2552 of 23S rRNA at the 2'-O position of the ribose in the fully assembled 50S ribosomal subunit. In Alkalilimnicola ehrlichii (strain ATCC BAA-1101 / DSM 17681 / MLHE-1), this protein is Ribosomal RNA large subunit methyltransferase E.